Consider the following 434-residue polypeptide: Fc receptor-like protein 6 (434 aa).

Residues 1 to 19 form the signal peptide; sequence MLLWTAVLLFVPCVGKTVW. 3 consecutive Ig-like C2-type domains span residues 20–95, 111–197, and 207–293; these read LYLQ…QTFT, PPVL…PQLE, and PVLT…KKLS. The Extracellular segment spans residues 20 to 307; that stretch reads LYLQAWPNPV…QVLFTPASNW (288 aa). Intrachain disulfides connect C39/C83, C132/C180, and C228/C276. N65 is a glycosylation site (N-linked (GlcNAc...) asparagine). The N-linked (GlcNAc...) asparagine glycan is linked to N273. A helical transmembrane segment spans residues 308–328; sequence LVPWLPASLLGLMVIAAALLV. The Cytoplasmic segment spans residues 329-434; it reads YVRSWRKAGP…PLSDCEEVLC (106 aa). The ITIM motif signature appears at 369–374; that stretch reads VVYSVV. Y371 carries the phosphotyrosine modification.

In terms of assembly, interacts (tyrosine phosphorylated) with PTPN11. Interacts (tyrosine phosphorylated) with PTPN6, INPP5D, INPPL1 and GRB2. Interacts with class II MHC HLA-DR when the alpha chain is associated with a beta-1, beta-4 or a beta-5 but not a beta-3 chain. In terms of processing, phosphorylated on Tyr residues. Tyrosine phosphorylation induces association with phosphatase PTPN11, PTPN6, INPP5D, INPPL1 and GRB2. Expressed by cytolytic cells including NK cells, effector and effector-memory CD8(+) T-cells, and a subset of NKT cells (at protein level). Also expressed in gamma delta T cells and in a rare subset of effector CD4(+) T-cells (at protein level). Expressed in spleen, skin, peripheral blood leukocytes, liver, lung, bone marrow, small intestine and placenta. Expression among T-cells is greatly expanded in HIV-1 infected individuals, and includes not only effector and effector-memory CD8(+) T-cells but also populations of CD4(+) T-cells. Expression among CD8(+) T-cells and NK cells is expanded in individuals with chronic lymphocytic leukemia (CLL) but is reduced in PBMCs from patients with acute (AML), chronic myeloid leukemia (CML) and non-Hodgkin's lymphoma. Expression is higher in PBMCs and/or CD3(+) cells of patients with autoimmune diseases, such as rheumatoid arthritis (RA), systemic lupus erythematosus (SLE) and idiopathic thrombocytopenia purpura (ITP). In contrast, expression in CD3(+) cells from patients with lupus anticoagulans (LA) is higher.

The protein localises to the cell membrane. Functionally, acts as a MHC class II receptor. When stimulated on its own, does not play a role in cytokine production or the release of cytotoxic granules by NK cells and cytotoxic CD8(+) T cells. Does not act as an Fc receptor. This chain is Fc receptor-like protein 6 (FCRL6), found in Homo sapiens (Human).